The sequence spans 50 residues: Alpha-conotoxin CnIG (50 aa).

The signal sequence occupies residues 1–7 (LTTTVVS). Over residues 1-13 (LTTTVVSFPSDSA) the composition is skewed to polar residues. Positions 1–26 (LTTTVVSFPSDSASDGRDNEAKDERS) are disordered. Residues 8–35 (FPSDSASDGRDNEAKDERSDMYELKRNG) constitute a propeptide that is removed on maturation. Residues 14–26 (SDGRDNEAKDERS) show a composition bias toward basic and acidic residues. Cystine bridges form between cysteine 37–cysteine 42 and cysteine 38–cysteine 48. Residue cysteine 48 is modified to Cysteine amide.

It belongs to the conotoxin A superfamily. Expressed by the venom duct.

It localises to the secreted. This Conus consors (Singed cone) protein is Alpha-conotoxin CnIG.